We begin with the raw amino-acid sequence, 348 residues long: Mitogen-activated protein kinase 14B (348 aa).

In terms of domain architecture, Protein kinase spans 25–309; it reads YQNLSPVGSG…ASQALAHPYF (285 aa). Residues 31-39 and lysine 54 contribute to the ATP site; that span reads VGSGAYGSV. Aspartate 169 acts as the Proton acceptor in catalysis. Threonine 181 bears the Phosphothreonine; by MAP2K3 mark. The short motif at 181-183 is the TXY element; the sequence is TGY. Residue tyrosine 183 is modified to Phosphotyrosine; by MAP2K3.

The protein belongs to the protein kinase superfamily. CMGC Ser/Thr protein kinase family. MAP kinase subfamily. The cofactor is Mg(2+). Post-translationally, dually phosphorylated on Thr-181 and Tyr-183, which activates the enzyme.

It is found in the cytoplasm. It localises to the nucleus. The catalysed reaction is L-seryl-[protein] + ATP = O-phospho-L-seryl-[protein] + ADP + H(+). It carries out the reaction L-threonyl-[protein] + ATP = O-phospho-L-threonyl-[protein] + ADP + H(+). With respect to regulation, activated by threonine and tyrosine phosphorylation by the dual specificity kinase, MKK3. Serine/threonine kinase which acts as an essential component of the MAP kinase signal transduction pathway. Mapk14b is one of the four p38 MAPKs which play an important role in the cascades of cellular responses evoked by extracellular stimuli such as pro-inflammatory cytokines or physical stress leading to direct activation of transcription factors. Accordingly, p38 MAPKs phosphorylate a broad range of proteins and it has been estimated that they may have approximately 200 to 300 substrates each. Some of the targets are downstream kinases which are activated through phosphorylation and further phosphorylate additional targets. The protein is Mitogen-activated protein kinase 14B (mapk14b) of Danio rerio (Zebrafish).